We begin with the raw amino-acid sequence, 200 residues long: Pyridoxal phosphate homeostasis protein (200 aa).

Lys11 is modified (N6-(pyridoxal phosphate)lysine).

Belongs to the pyridoxal phosphate-binding protein YggS/PROSC family. As to quaternary structure, monomer.

Its function is as follows. Pyridoxal 5'-phosphate (PLP)-binding protein, which is involved in PLP homeostasis. In Buchnera aphidicola subsp. Acyrthosiphon pisum (strain APS) (Acyrthosiphon pisum symbiotic bacterium), this protein is Pyridoxal phosphate homeostasis protein.